Here is a 367-residue protein sequence, read N- to C-terminus: tRNA 2-selenouridine synthase (367 aa).

One can recognise a Rhodanese domain in the interval 12 to 136 (FLNDRPLMDA…LRGFLIDTLE (125 aa)). The S-selanylcysteine intermediate role is filled by Cys-95.

The protein belongs to the SelU family. In terms of assembly, monomer.

It carries out the reaction 5-methylaminomethyl-2-thiouridine(34) in tRNA + selenophosphate + (2E)-geranyl diphosphate + H2O + H(+) = 5-methylaminomethyl-2-selenouridine(34) in tRNA + (2E)-thiogeraniol + phosphate + diphosphate. The enzyme catalyses 5-methylaminomethyl-2-thiouridine(34) in tRNA + (2E)-geranyl diphosphate = 5-methylaminomethyl-S-(2E)-geranyl-thiouridine(34) in tRNA + diphosphate. The catalysed reaction is 5-methylaminomethyl-S-(2E)-geranyl-thiouridine(34) in tRNA + selenophosphate + H(+) = 5-methylaminomethyl-2-(Se-phospho)selenouridine(34) in tRNA + (2E)-thiogeraniol. It catalyses the reaction 5-methylaminomethyl-2-(Se-phospho)selenouridine(34) in tRNA + H2O = 5-methylaminomethyl-2-selenouridine(34) in tRNA + phosphate. Its function is as follows. Involved in the post-transcriptional modification of the uridine at the wobble position (U34) of tRNA(Lys), tRNA(Glu) and tRNA(Gln). Catalyzes the conversion of 2-thiouridine (S2U-RNA) to 2-selenouridine (Se2U-RNA). Acts in a two-step process involving geranylation of 2-thiouridine (S2U) to S-geranyl-2-thiouridine (geS2U) and subsequent selenation of the latter derivative to 2-selenouridine (Se2U) in the tRNA chain. The polypeptide is tRNA 2-selenouridine synthase (Pseudomonas fluorescens (strain Pf0-1)).